The chain runs to 1455 residues: Membrane-associated guanylate kinase, WW and PDZ domain-containing protein 2 (1455 aa).

Residues 17–101 enclose the PDZ 1 domain; that stretch reads ESVIGRNPEG…PLRLKCVKQG (85 aa). In terms of domain architecture, Guanylate kinase-like spans 109–283; sequence RHYLNLRFQK…APVYSQPEEL (175 aa). A disordered region spans residues 205-306; sequence PGATPSAEGK…DNEEPDPLPD (102 aa). The span at 241–252 shows a compositional bias: low complexity; that stretch reads VVNGNGVVVTPE. A compositionally biased stretch (basic and acidic residues) spans 281–296; the sequence is EELKEQMDDTKPTKPE. 2 consecutive WW domains span residues 302–335 and 348–381; these read DPLPDNWEMAYTEKGEVYFIDHNTKTTSWLDPRL and NELPYGWEKIDDPIYGTYYVDHINRRTQFENPVL. Residues 302-381 form an interaction with DDN region; sequence DPLPDNWEMA…RRTQFENPVL (80 aa). Residue Tyr-362 is modified to Phosphotyrosine. 2 PDZ domains span residues 426–510 and 605–683; these read STTL…CRGY and TLTI…HRGG. Ser-686 bears the Phosphoserine mark. The 83-residue stretch at 778–860 folds into the PDZ 4 domain; sequence DVHLRRMESG…NGQVNLTVRR (83 aa). A Phosphotyrosine modification is found at Tyr-827. Positions 869 to 913 are disordered; that stretch reads CPENGRSPGSVSTHHSSPRSDYATYTNSNHAAPSSNASPPEGFAS. A phosphoserine mark is found at Ser-884 and Ser-885. A compositionally biased stretch (low complexity) spans 895 to 908; sequence NSNHAAPSSNASPP. The PDZ 5 domain occupies 920-1010; that stretch reads DVVIHRKENE…SVTLRIIPQE (91 aa). Residues 1011–1040 are compositionally biased toward polar residues; sequence ELNSPTSAPSSEKQSPMAQQSPLAQQSPLA. The segment at 1011-1136 is disordered; sequence ELNSPTSAPS…PDTRQYPLSD (126 aa). Ser-1014 is subject to Phosphoserine. Positions 1067–1083 are enriched in basic and acidic residues; it reads NSYRSEVKARQDVKPDI. The PDZ 6 domain occupies 1147–1229; sequence TVDMEKGAKG…RVRLLLKRGT (83 aa). A disordered region spans residues 1231–1455; the sequence is QVPEYDEPAP…LKPGASAASR (225 aa). Low complexity predominate over residues 1238–1249; that stretch reads PAPWSSPAAAAP. The span at 1287-1299 shows a compositional bias: basic and acidic residues; the sequence is DIKREHDVRKPKE. 3 stretches are compositionally biased toward low complexity: residues 1346–1363, 1399–1412, and 1422–1433; these read EARAPGLAAADAADAARA, ALEAEGRAGARAGP, and APARKAAVAPGP.

This sequence belongs to the MAGUK family. In terms of assembly, interacts (via its WW domains) with DRPLA. Interacts (via its second PDZ domain) with PTEN (via unphosphorylated C-terminus); this interaction diminishes the degradation rate of PTEN. Interacts (via guanylate kinase domain) with DLGAP1. Interacts (via the PDZ domains) with GRIN2A, GRID2 and NLGN1. Interacts with CTNND2, CTNNB1, MAGUIN-1, ACVR2A, SMAD2 and SMAD3. Part of a complex consisting of MAGI2/ARIP1, ACVR2A, ACVR1B and SMAD3. May interact with HTR2A. Interacts with IGSF9, RAPGEF2 and HTR4. Identified in a complex with ACTN4, CASK, IQGAP1, NPHS1, SPTAN1 and SPTBN1. Found in a complex, at least composed of KIDINS220, MAGI2, NTRK1 and RAPGEF2; the complex is mainly formed at late endosomes in a NGF-dependent manner. Interacts with RAPGEF2; the interaction occurs before or after nerve growth factor (NGF) stimulation. Interacts (via PDZ domain) with KIDINS220 (via C-terminal domain). Interacts with DDN. Interacts with DLL1. Found in a complex with IGSF9B and NLGN2; the interaction with IGSF9B is mediated via the PDZ 5 and PDZ 6 domains, while the interaction with NLGN2 is mediated via the WW1, WW2 and PDZ2 domains. Interacts (via PDZ 6 domain) with USH1G (via SAM domain); the interaction is triggered by phosphorylation of USH1G by CK2 and negatively regulates MAGI2-mediated endocytosis. In terms of tissue distribution, specifically expressed in brain.

It is found in the cytoplasm. The protein localises to the late endosome. It localises to the synapse. Its subcellular location is the synaptosome. The protein resides in the cell membrane. It is found in the cytoskeleton. The protein localises to the microtubule organizing center. It localises to the centrosome. Its subcellular location is the cell projection. The protein resides in the cilium. It is found in the centriole. The protein localises to the photoreceptor inner segment. It localises to the photoreceptor outer segment. Seems to act as a scaffold molecule at synaptic junctions by assembling neurotransmitter receptors and cell adhesion proteins. Plays a role in nerve growth factor (NGF)-induced recruitment of RAPGEF2 to late endosomes and neurite outgrowth. May play a role in regulating activin-mediated signaling in neuronal cells. Enhances the ability of PTEN to suppress AKT1 activation. Plays a role in receptor-mediated clathrin-dependent endocytosis which is required for ciliogenesis. The sequence is that of Membrane-associated guanylate kinase, WW and PDZ domain-containing protein 2 (MAGI2) from Homo sapiens (Human).